The following is a 99-amino-acid chain: uncharacterized protein (99 aa).

This is an uncharacterized protein from Bacillus subtilis (strain 168).